Here is a 111-residue protein sequence, read N- to C-terminus: MSTKYLAAYALASLSKASPSQADVEAICKAVHIDVDQATLAFVMESVTGRDVATLIAEGAAKMSAMPAASSGAAAGVTASAAGDAAPAAAAAKKDEPEEEADDDMGFGLFD.

The disordered stretch occupies residues 86–111 (APAAAAAKKDEPEEEADDDMGFGLFD).

It belongs to the eukaryotic ribosomal protein P1/P2 family. In terms of assembly, P1 and P2 exist as dimers at the large ribosomal subunit. In terms of processing, phosphorylated.

Functionally, plays an important role in the elongation step of protein synthesis. The polypeptide is Large ribosomal subunit protein P2-2 (LIP') (Leishmania infantum).